A 346-amino-acid chain; its full sequence is Phenylalanine--tRNA ligase alpha subunit (346 aa).

Glu-261 is a Mg(2+) binding site.

It belongs to the class-II aminoacyl-tRNA synthetase family. Phe-tRNA synthetase alpha subunit type 1 subfamily. Tetramer of two alpha and two beta subunits. Requires Mg(2+) as cofactor.

It localises to the cytoplasm. It carries out the reaction tRNA(Phe) + L-phenylalanine + ATP = L-phenylalanyl-tRNA(Phe) + AMP + diphosphate + H(+). The protein is Phenylalanine--tRNA ligase alpha subunit of Streptococcus agalactiae serotype III (strain NEM316).